A 146-amino-acid chain; its full sequence is UPF0178 protein LMOf2365_1475 (146 aa).

Belongs to the UPF0178 family.

This Listeria monocytogenes serotype 4b (strain F2365) protein is UPF0178 protein LMOf2365_1475.